The following is a 328-amino-acid chain: Leucine carboxyl methyltransferase 1 (328 aa).

S-adenosyl-L-methionine-binding positions include Arg81, Gly105, Asp128, 175–177 (DLN), and Glu201.

Belongs to the methyltransferase superfamily. LCMT family.

It catalyses the reaction [phosphatase 2A protein]-C-terminal L-leucine + S-adenosyl-L-methionine = [phosphatase 2A protein]-C-terminal L-leucine methyl ester + S-adenosyl-L-homocysteine. Its activity is regulated as follows. Inhibited by S-adenosyl-L-homocysteine. Methylates the carboxyl group of the C-terminal leucine residue of protein phosphatase 2A catalytic subunits to form alpha-leucine ester residues. Acts on the two major protein phosphatase 2A catalytic subunits, PPH21 and PPH22. The protein is Leucine carboxyl methyltransferase 1 (PPM1) of Saccharomyces cerevisiae (strain ATCC 204508 / S288c) (Baker's yeast).